The sequence spans 220 residues: ATP synthase subunit beta, chloroplastic (220 aa).

It belongs to the ATPase alpha/beta chains family. F-type ATPases have 2 components, CF(1) - the catalytic core - and CF(0) - the membrane proton channel. CF(1) has five subunits: alpha(3), beta(3), gamma(1), delta(1), epsilon(1). CF(0) has four main subunits: a(1), b(1), b'(1) and c(9-12).

It is found in the plastid. It localises to the chloroplast thylakoid membrane. The enzyme catalyses ATP + H2O + 4 H(+)(in) = ADP + phosphate + 5 H(+)(out). Its function is as follows. Produces ATP from ADP in the presence of a proton gradient across the membrane. The catalytic sites are hosted primarily by the beta subunits. The sequence is that of ATP synthase subunit beta, chloroplastic (atpB) from Osmundastrum cinnamomeum (Cinnamon fern).